A 513-amino-acid polypeptide reads, in one-letter code: ATP synthase subunit alpha 2 (513 aa).

169-176 is an ATP binding site; it reads GDRQVGKT.

The protein belongs to the ATPase alpha/beta chains family. F-type ATPases have 2 components, CF(1) - the catalytic core - and CF(0) - the membrane proton channel. CF(1) has five subunits: alpha(3), beta(3), gamma(1), delta(1), epsilon(1). CF(0) has three main subunits: a(1), b(2) and c(9-12). The alpha and beta chains form an alternating ring which encloses part of the gamma chain. CF(1) is attached to CF(0) by a central stalk formed by the gamma and epsilon chains, while a peripheral stalk is formed by the delta and b chains.

It is found in the cell inner membrane. It carries out the reaction ATP + H2O + 4 H(+)(in) = ADP + phosphate + 5 H(+)(out). Its function is as follows. Produces ATP from ADP in the presence of a proton gradient across the membrane. The alpha chain is a regulatory subunit. This is ATP synthase subunit alpha 2 from Psychromonas ingrahamii (strain DSM 17664 / CCUG 51855 / 37).